Consider the following 301-residue polypeptide: 33 kDa chaperonin (301 aa).

2 disulfide bridges follow: cysteine 244-cysteine 246 and cysteine 277-cysteine 280.

It belongs to the HSP33 family. In terms of processing, under oxidizing conditions two disulfide bonds are formed involving the reactive cysteines. Under reducing conditions zinc is bound to the reactive cysteines and the protein is inactive.

It localises to the cytoplasm. Redox regulated molecular chaperone. Protects both thermally unfolding and oxidatively damaged proteins from irreversible aggregation. Plays an important role in the bacterial defense system toward oxidative stress. The protein is 33 kDa chaperonin of Geobacter sulfurreducens (strain ATCC 51573 / DSM 12127 / PCA).